The following is a 104-amino-acid chain: L-rhamnose mutarotase (104 aa).

Residue tyrosine 18 participates in substrate binding. Histidine 22 acts as the Proton donor in catalysis. Substrate contacts are provided by residues tyrosine 41 and 76–77; that span reads WW.

This sequence belongs to the rhamnose mutarotase family. As to quaternary structure, homodimer.

It is found in the cytoplasm. The enzyme catalyses alpha-L-rhamnose = beta-L-rhamnose. It participates in carbohydrate metabolism; L-rhamnose metabolism. In terms of biological role, involved in the anomeric conversion of L-rhamnose. This chain is L-rhamnose mutarotase, found in Escherichia coli (strain K12 / MC4100 / BW2952).